The chain runs to 236 residues: 2-C-methyl-D-erythritol 4-phosphate cytidylyltransferase (236 aa).

Belongs to the IspD/TarI cytidylyltransferase family. IspD subfamily.

The enzyme catalyses 2-C-methyl-D-erythritol 4-phosphate + CTP + H(+) = 4-CDP-2-C-methyl-D-erythritol + diphosphate. The protein operates within isoprenoid biosynthesis; isopentenyl diphosphate biosynthesis via DXP pathway; isopentenyl diphosphate from 1-deoxy-D-xylulose 5-phosphate: step 2/6. Catalyzes the formation of 4-diphosphocytidyl-2-C-methyl-D-erythritol from CTP and 2-C-methyl-D-erythritol 4-phosphate (MEP). In Symbiobacterium thermophilum (strain DSM 24528 / JCM 14929 / IAM 14863 / T), this protein is 2-C-methyl-D-erythritol 4-phosphate cytidylyltransferase.